Reading from the N-terminus, the 447-residue chain is Alpha-1,3-mannosyl-glycoprotein 2-beta-N-acetylglucosaminyltransferase (447 aa).

Residues 1–6 (MLKKQT) lie on the Cytoplasmic side of the membrane. The chain crosses the membrane as a helical; Signal-anchor for type II membrane protein span at residues 7 to 29 (AGLVLWGAIIFVGWNALLLLFFW). Over 30–447 (TRPAPGRLPS…TWTGYDPSWN (418 aa)) the chain is Lumenal. A disulfide bridge links C115 with C145. Substrate contacts are provided by R117, D144, H190, and D212. D213 serves as a coordination point for Mn(2+). C239 and C305 form a disulfide bridge. D291 serves as the catalytic Proton acceptor. Substrate is bound at residue S322.

It belongs to the glycosyltransferase 13 family. Interacts with MGAT4D. Interacts with BRI3. Mn(2+) serves as cofactor. Detected in kidney, liver and brain.

It is found in the golgi apparatus membrane. The protein resides in the cytoplasm. Its subcellular location is the perinuclear region. The catalysed reaction is N(4)-(alpha-D-Man-(1-&gt;3)-[alpha-D-Man-(1-&gt;3)-[alpha-D-Man-(1-&gt;6)]-alpha-D-Man-(1-&gt;6)]-beta-D-Man-(1-&gt;4)-beta-D-GlcNAc-(1-&gt;4)-beta-D-GlcNAc)-L-asparaginyl-[protein] (N-glucan mannose isomer 5A1,2) + UDP-N-acetyl-alpha-D-glucosamine = N(4)-{beta-D-GlcNAc-(1-&gt;2)-alpha-D-Man-(1-&gt;3)-[alpha-D-Man-(1-&gt;3)-[alpha-D-Man-(1-&gt;6)]-alpha-D-Man-(1-&gt;6)]-beta-D-Man-(1-&gt;4)-beta-D-GlcNAc-(1-&gt;4)-beta-D-GlcNAc}-L-asparaginyl-[protein] + UDP + H(+). The protein operates within protein modification; protein glycosylation. Initiates complex N-linked carbohydrate formation. Essential for the conversion of high-mannose to hybrid and complex N-glycans. In Mus musculus (Mouse), this protein is Alpha-1,3-mannosyl-glycoprotein 2-beta-N-acetylglucosaminyltransferase (Mgat1).